The primary structure comprises 600 residues: MAIKKAKRKSNVEEVKTQLLEIKTELKDGVFTFTGPMTINEFSKKIKKQAKDVILHFFKQGKMYNANQIINEEEIAELCLEFDYEFKKEEQITVSNFMDTLVLSDEAKDLEERAPIITVMGHVDHGKTTLIDVIRKSKIVDTEAGGITQHTGAYQIEYNGKKITFIDTPGHEAFTQMRSRGAKVTDIVILVVAADDGVMPQTKEAIDHAKSANVPIIVFVNKMDKPNKDIDRILSALSTLDVVSEEWSGDTQFIYGSALKNQGIDKLFDAINLQAEILELKANRNRDAIGTIIESHLDKGKGSVSVLIVQNGTLTPRDFIVAGSQYGRIRSIEDTNGNSLDAAYPGTPVIVTGLNYVPNAGDRFIALSDESFAKNIAEQKAFVDKQAELISRNTIVVQDGIKVLNIILKADVQGIAEAIKSKLLEIKNEEVKINVVRSSVGAITKSDILLAQASNAIIFGFNIRATGGIKTFAEESRVIVKTHTIIYELLDEVNELLNGLKAPKFKEVVTGEARIKKIFFYSKVGNIAGCEVISGKVTSGTKMRLIRNGITVHEGILDSLQREKNQAREVLKGFEFGTHIKKFNDIKEDDIIQTFEDVQI.

Residues 112-279 (ERAPIITVMG…AINLQAEILE (168 aa)) form the tr-type G domain. The tract at residues 121 to 128 (GHVDHGKT) is G1. 121 to 128 (GHVDHGKT) is a GTP binding site. The segment at 146 to 150 (GITQH) is G2. Residues 167–170 (DTPG) are G3. Residues 167 to 171 (DTPGH) and 221 to 224 (NKMD) contribute to the GTP site. The tract at residues 221–224 (NKMD) is G4. The G5 stretch occupies residues 257-259 (SAL).

This sequence belongs to the TRAFAC class translation factor GTPase superfamily. Classic translation factor GTPase family. IF-2 subfamily.

The protein resides in the cytoplasm. One of the essential components for the initiation of protein synthesis. Protects formylmethionyl-tRNA from spontaneous hydrolysis and promotes its binding to the 30S ribosomal subunits. Also involved in the hydrolysis of GTP during the formation of the 70S ribosomal complex. The chain is Translation initiation factor IF-2 from Mycoplasma mobile (strain ATCC 43663 / 163K / NCTC 11711) (Mesomycoplasma mobile).